A 478-amino-acid chain; its full sequence is Transcript termination protein A18 (478 aa).

The Helicase ATP-binding domain maps to 98 to 254 (KVELKRPMYV…NDVINVSNSS (157 aa)). 111 to 118 (LACGFGKT) is an ATP binding site. The DESH box motif lies at 204-207 (DESH). Residues 307 to 454 (ILDTIIYDFE…IITLAIEKLG (148 aa)) enclose the Helicase C-terminal domain.

This sequence belongs to the helicase family. Poxviruses subfamily. Interacts with G2. Might be part of a transcription complex composed at least of G2, A18, and H5.

The protein resides in the virion. Its function is as follows. DNA helicase which seems to act as a postreplicative transcription termination factor. Involved in ATP-dependent release of nascent RNA. Forms a stable complex with single-stranded DNA, and to a lesser extent RNA. The polypeptide is Transcript termination protein A18 (Erythrocebus patas (Red guenon)).